A 409-amino-acid chain; its full sequence is Tryptophan synthase beta chain (409 aa).

An N6-(pyridoxal phosphate)lysine modification is found at K104.

This sequence belongs to the TrpB family. As to quaternary structure, tetramer of two alpha and two beta chains. Requires pyridoxal 5'-phosphate as cofactor.

It catalyses the reaction (1S,2R)-1-C-(indol-3-yl)glycerol 3-phosphate + L-serine = D-glyceraldehyde 3-phosphate + L-tryptophan + H2O. Its pathway is amino-acid biosynthesis; L-tryptophan biosynthesis; L-tryptophan from chorismate: step 5/5. Functionally, the beta subunit is responsible for the synthesis of L-tryptophan from indole and L-serine. The sequence is that of Tryptophan synthase beta chain from Trichodesmium erythraeum (strain IMS101).